The sequence spans 234 residues: Small ribosomal subunit protein uS3 (234 aa).

The KH type-2 domain maps to 39 to 107 (IRKFLKKELY…EVSINIKEVK (69 aa)).

Belongs to the universal ribosomal protein uS3 family. As to quaternary structure, part of the 30S ribosomal subunit. Forms a tight complex with proteins S10 and S14.

Its function is as follows. Binds the lower part of the 30S subunit head. Binds mRNA in the 70S ribosome, positioning it for translation. This Helicobacter pylori (strain J99 / ATCC 700824) (Campylobacter pylori J99) protein is Small ribosomal subunit protein uS3.